The sequence spans 154 residues: MIITTWIMYIFARKTVGLPFPPRVNSDIEVEESEAVSVVQHWLNKTEEEASRSIREKMSINDSPTHGHDIHVTRDLVKHHLSKSDMLTDPSQEVLEERTRIQFIRWSHTRIFQVPSEVMDDVMQERIDQVRRSVSHLMCDSYNDPSFRTSCSEC.

A mitochondrion-targeting transit peptide spans 1 to 24 (MIITTWIMYIFARKTVGLPFPPRV). Phosphoserine occurs at positions 26 and 116.

In terms of tissue distribution, expressed specifically in adult testis (at protein level).

It localises to the mitochondrion outer membrane. It is found in the mitochondrion. Its subcellular location is the cell projection. The protein resides in the cilium. The protein localises to the flagellum. Functionally, essential for sperm motility and male fertility. Plays an important role in sperm motility by regulating the organization and function of the mitochondria and is also required for correct sperm midpiece assembly. The chain is Spermatogenesis-associated protein 19, mitochondrial (Spata19) from Mus musculus (Mouse).